The chain runs to 224 residues: Propanediol dehydratase medium subunit (224 aa).

The tract at residues 1 to 18 (MEINEKLLRQIIEDVLRD) is targets protein to the BMC.

The protein belongs to the diol/glycerol dehydratase medium subunit family. As to quaternary structure, the propanediol dehydratase enzyme is a heterotrimeric complex composed of a large (PduC), a medium (PduD) and a small (PduE) subunit. Adenosylcob(III)alamin serves as cofactor.

It is found in the bacterial microcompartment. The catalysed reaction is propane-1,2-diol = propanal + H2O. It participates in polyol metabolism; 1,2-propanediol degradation. Its activity is regulated as follows. Inhibited by glycerol. Functionally, part of the PduCDE complex that catalyzes the dehydration of 1,2-propanediol (1,2-PD) to propionaldehyde. Required for S.typhimurium growth on 1,2-PD as the sole carbon and energy source. This subunit is directly targeted to the bacterial microcompartment (BMC) dedicated to 1,2-PD degradation, and is also responsible for targeting the other 2 subunits (pduC and pduE). In terms of biological role, the 1,2-PD-specific bacterial microcompartment (BMC) concentrates low levels of 1,2-PD catabolic enzymes, concentrates volatile reaction intermediates thus enhancing pathway flux and keeps the level of toxic, mutagenic propionaldehyde low. The sequence is that of Propanediol dehydratase medium subunit from Salmonella typhimurium (strain LT2 / SGSC1412 / ATCC 700720).